We begin with the raw amino-acid sequence, 807 residues long: Mechanosensitive cation channel TMEM63A (807 aa).

The Extracellular portion of the chain corresponds to 1 to 51 (MTDSPFLELWQSRAVSVREQLGLGDRPNDSYCYNSAKNSTVLQGVTFGGIP). N-linked (GlcNAc...) asparagine glycosylation is present at Asn38. The chain crosses the membrane as a helical span at residues 52-74 (TVLLIDVSCFLFLILVFSIIRRR). Residues 75-134 (FWDYGRIALVSEADSEPRFQRLSSTSSSGQQDFENELGCCPWLTAIFRLHDDQILEWCGE) are Cytoplasmic-facing. Residues 135-167 (DAIHYLSFQRHIIFLLVVVSFLSLCVILPVNLS) form a helical membrane-spanning segment. The Extracellular portion of the chain corresponds to 168-191 (GDLLDKDPYSFGRTTIANLQTDND). Residues 192 to 217 (LLWLHTIFAVIYLFLTVGFMRHHTQS) traverse the membrane as a helical segment. Topologically, residues 218–416 (IKYKEENLVR…CWKNLSIQGL (199 aa)) are cytoplasmic. The segment at 219-414 (KYKEENLVRR…DICWKNLSIQ (196 aa)) is intracellular linker IL2; confers mechanosensitivity. Residues 417-444 (RWWLQWLGINFTLFLGLFFLTTPSIILS) form a helical membrane-spanning segment. Topologically, residues 445-462 (TMDKFNVTKPIHALNNPI) are extracellular. A glycan (N-linked (GlcNAc...) asparagine) is linked at Asn450. A helical membrane pass occupies residues 463 to 490 (ISQFFPTLLLWSFSALLPSIVYYSTLLE). At 491–495 (SHWTK) the chain is on the cytoplasmic side. The chain crosses the membrane as a helical span at residues 496 to 532 (SGENQIMMTKVYIFLIFMVLILPSLGLTSLDFFFRWL). Topologically, residues 533–554 (FDKTSSEASIRLECVFLPDQGA) are extracellular. Residues 555 to 586 (FFVNYVIASAFIGNGMELLRLPGLILYTFRMI) form a helical membrane-spanning segment. Positions 555 to 586 (FFVNYVIASAFIGNGMELLRLPGLILYTFRMI) are gating helix. Over 587 to 606 (MAKTAADRRNVKQNQAFQYE) the chain is Cytoplasmic. The chain crosses the membrane as a helical span at residues 607 to 624 (FGAMYAWMLCVFTVIMAY). Residues 625 to 628 (SITC) are Extracellular-facing. The chain crosses the membrane as a helical span at residues 629-651 (PIIAPFGLIYILLKHMVDRHNLY). At 652 to 661 (FIYLPAKLEK) the chain is on the cytoplasmic side. The helical transmembrane segment at 662–689 (GIHFAAVNQALAAPILCLFWLYFFSFLR) threads the bilayer. Over 690-694 (LGMKA) the chain is Extracellular. Residues 695–709 (PATLFTFLVVLLTIL) form a helical membrane-spanning segment. Residues 710–807 (VCLAHTCFGY…GSVAAAPQEA (98 aa)) lie on the Cytoplasmic side of the membrane. A Phosphoserine modification is found at Ser739.

It belongs to the CSC1 (TC 1.A.17) family. As to quaternary structure, monomer. N-Glycosylated.

The protein resides in the lysosome membrane. Its subcellular location is the early endosome membrane. The protein localises to the cell membrane. It carries out the reaction Ca(2+)(in) = Ca(2+)(out). Mechanosensitive cation channel with low conductance and high activation threshold. In contrast to TMEM63B, does not show phospholipid scramblase activity. Acts as a regulator of lysosomal morphology by mediating lysosomal mechanosensitivity. Important for the baby's first breath and respiration throughout life. Upon lung inflation conducts cation currents in alveolar type 1 and 2 cells triggering lamellar body exocytosis and surfactant secretion into airspace. Also acts as an osmosensitive cation channel preferentially activated by hypotonic stress. This Pongo abelii (Sumatran orangutan) protein is Mechanosensitive cation channel TMEM63A (TMEM63A).